The sequence spans 477 residues: Cytochrome P450 monooxygenase poxC (477 aa).

The helical transmembrane segment at alanine 24–tyrosine 41 threads the bilayer. Cysteine 420 contributes to the heme binding site.

It belongs to the cytochrome P450 family. Heme serves as cofactor.

It is found in the membrane. It participates in secondary metabolite biosynthesis. Cytochrome P450 monooxygenase; part of the gene cluster that mediates the biosynthesis of oxaleimides, cytotoxic compounds containing an unusual disubstituted succinimide moiety. The first step of the pathway is provided by the HR-PKS poxF that serves in a new mode of collaborative biosynthesis with the PKS-NRPS poxE, by providing the olefin containing amino acid substrate via the synthesis of an ACP-bound dec-4-enoate. The cytochrome P450 monooxygenase poxM-catalyzed oxidation at the alpha-position creates the enzyme-bound 2-hydroxydec-4-enoyl-ACP thioester, which may be prone to spontaneous hydrolysis to yield 2-hydroxydec-4-enoic acid due to increased electrophilicity of the carbonyl. 2-hydroxydec-4-enoic acid can then be further oxidized by poxM to yield the alpha-ketoacid 2-oxodec-4-enoicacid, which is reductively aminated by the aminotransferase poxL to yield (S,E)-2-aminodec-4-enoic acid. The Hybrid PKS-NRPS synthetase poxE then performs condensation between the octaketide product of its PKS modules and the amino group of (S,E)-2-aminodec-4-enoic acid which is activated and incorporated by the adenylation domain. The resulting aminoacyl product can be cyclized by the Diels-Alderase PoxQ and reductively released by the reductive (R) domain of poxE to yield an aldehyde intermediate. The released aldehyde is then substrate for a Knoevenagel condensation by the hydrolyase poxO followed by an oxidation at the 5-position of the pyrrolidone ring. The presence of the olefin from the amino acid building block allows for migration of the substituted allyl group to occur. This allylic transposition reaction takes place in a conjugate addition, semipinacol-like fashion to yield a succinimide intermediate. Iterative two-electron oxidations of the C7 methyl of the succinimide intermediate to the carboxylic acid can be catalyzed by one of two remaining cytochrome P450 monooxygenasess poxC or poxD to yield oxaleimide A. Subsequent oxidation yields the maleimide scaffold oxaleimide I. Both oxaleimide A and oxaleimide I can undergo oxidative modifications in the decalin ring to yield the series of products oxaleimides B to H. The sequence is that of Cytochrome P450 monooxygenase poxC from Penicillium oxalicum (strain 114-2 / CGMCC 5302) (Penicillium decumbens).